Here is a 319-residue protein sequence, read N- to C-terminus: Olfactory receptor 13F1 (319 aa).

Residues 1–25 (MFPANWTSVKVFFFLGFFHYPKVQV) lie on the Extracellular side of the membrane. Residue Asn5 is glycosylated (N-linked (GlcNAc...) asparagine). Residues 26-46 (IIFAVCLLMYLITLLGNIFLI) traverse the membrane as a helical segment. The Cytoplasmic portion of the chain corresponds to 47–54 (SITILDSH). A helical membrane pass occupies residues 55–75 (LHTPMYLFLSNLSFLDIWYSS). Over 76 to 99 (SALSPMLANFVSGRNTISFSGCAT) the chain is Extracellular. Cysteines 97 and 189 form a disulfide. A helical transmembrane segment spans residues 100–120 (QMYLSLAMGSTECVLLPMMAY). Residues 121-139 (DRYVAICNPLRYPVIMNRR) lie on the Cytoplasmic side of the membrane. A helical membrane pass occupies residues 140–160 (TCVQIAAGSWMTGCLTAMVEM). Residues 161–197 (MSVLPLSLCGNSIINHFTCEILAILKLVCVDTSLVQL) are Extracellular-facing. Residues 198–217 (IMLVISVLLLPMPMLLICIS) traverse the membrane as a helical segment. Topologically, residues 218–237 (YAFILASILRISSVEGRSKA) are cytoplasmic. Residues 238–258 (FSTCTAHLMVVVLFYGTALSM) form a helical membrane-spanning segment. Residues 259-271 (HLKPSAVDSQEID) are Extracellular-facing. The helical transmembrane segment at 272–292 (KFMALVYAGQTPMLNPIIYSL) threads the bilayer. Topologically, residues 293–319 (RNKEVKVALKKLLIRNHFNTAFISILK) are cytoplasmic.

The protein belongs to the G-protein coupled receptor 1 family.

The protein resides in the cell membrane. Its function is as follows. Odorant receptor. This is Olfactory receptor 13F1 (OR13F1) from Homo sapiens (Human).